The sequence spans 160 residues: Cyclic pyranopterin monophosphate synthase (160 aa).

Substrate is bound by residues 77–79 and 114–115; these read LCH and ME. The active site involves Asp129.

It belongs to the MoaC family. In terms of assembly, homohexamer; trimer of dimers.

It catalyses the reaction (8S)-3',8-cyclo-7,8-dihydroguanosine 5'-triphosphate = cyclic pyranopterin phosphate + diphosphate. It participates in cofactor biosynthesis; molybdopterin biosynthesis. Catalyzes the conversion of (8S)-3',8-cyclo-7,8-dihydroguanosine 5'-triphosphate to cyclic pyranopterin monophosphate (cPMP). The protein is Cyclic pyranopterin monophosphate synthase of Alcanivorax borkumensis (strain ATCC 700651 / DSM 11573 / NCIMB 13689 / SK2).